The primary structure comprises 747 residues: Polyribonucleotide nucleotidyltransferase (747 aa).

Mg(2+)-binding residues include aspartate 487 and aspartate 493. One can recognise a KH domain in the interval 554–613 (PSTTTIKIDKDKIRDVIGPGGKVIKEICETSDAKIDISDDGTVSVYASDRDKLKVALDKI). The 69-residue stretch at 623 to 691 (GEIFNGTVMK…NKGKAKLTIK (69 aa)) folds into the S1 motif domain. The tract at residues 691-747 (KNADKDKSSNNPKQKNNVNNSKENSEPERRDSSKKRAWNEDNNSDTTEVITERKYFN) is disordered. Over residues 699-712 (SNNPKQKNNVNNSK) the composition is skewed to low complexity. A compositionally biased stretch (polar residues) spans 730–739 (EDNNSDTTEV).

The protein belongs to the polyribonucleotide nucleotidyltransferase family. The cofactor is Mg(2+).

The protein resides in the cytoplasm. It catalyses the reaction RNA(n+1) + phosphate = RNA(n) + a ribonucleoside 5'-diphosphate. Its function is as follows. Involved in mRNA degradation. Catalyzes the phosphorolysis of single-stranded polyribonucleotides processively in the 3'- to 5'-direction. This chain is Polyribonucleotide nucleotidyltransferase, found in Rickettsia akari (strain Hartford).